The following is a 233-amino-acid chain: Cytochrome c oxidase subunit 3 (233 aa).

Helical transmembrane passes span 62–82, 98–118, 135–155, and 172–192; these read VVLF…AYLI, LELL…FVMH, WFGI…YEYF, and VLTG…LSVL.

This sequence belongs to the cytochrome c oxidase subunit 3 family.

It localises to the cell membrane. The catalysed reaction is 4 Fe(II)-[cytochrome c] + O2 + 8 H(+)(in) = 4 Fe(III)-[cytochrome c] + 2 H2O + 4 H(+)(out). This chain is Cytochrome c oxidase subunit 3 (ctaE), found in Synechocystis sp. (strain ATCC 27184 / PCC 6803 / Kazusa).